A 339-amino-acid chain; its full sequence is FR-33289 synthase (339 aa).

The Fe(2+) site is built by His150, Asp152, and His288.

This sequence belongs to the TfdA dioxygenase family. Homodimer. Fe(2+) serves as cofactor.

It carries out the reaction 3-(N-acetyl-N-hydroxy)aminopropylphosphonate + 2-oxoglutarate + O2 = (R)-(3-(acetylhydroxyamino)-2-hydroxypropyl)phosphonate + succinate + CO2. The protein operates within antibiotic biosynthesis. Its function is as follows. Monooxygenase involved in the biosynthesis of the phosphonate antibiotic FR-33289, an antimalarial agent. Catalyzes the oxidative decarboxylation of the antibiotic FR-900098 (3-(N-acetyl-N-hydroxy)aminopropylphosphonate) to form FR-33289 ((R)-(3-(acetylhydroxyamino)-2-hydroxypropyl)phosphonate). This chain is FR-33289 synthase, found in Streptomyces rubellomurinus (strain ATCC 31215).